A 238-amino-acid polypeptide reads, in one-letter code: Ribonuclease 3 (238 aa).

The region spanning 4 to 134 (PRQALLDAFG…LLGAIYLHHG (131 aa)) is the RNase III domain. E44 lines the Mg(2+) pocket. The active site involves D48. 2 residues coordinate Mg(2+): D120 and E123. E123 is a catalytic residue. Positions 161 to 229 (DWKTSLQELT…ASAAWKALDV (69 aa)) constitute a DRBM domain.

The protein belongs to the ribonuclease III family. In terms of assembly, homodimer. Mg(2+) is required as a cofactor.

It localises to the cytoplasm. It catalyses the reaction Endonucleolytic cleavage to 5'-phosphomonoester.. Its function is as follows. Digests double-stranded RNA. Involved in the processing of primary rRNA transcript to yield the immediate precursors to the large and small rRNAs (23S and 16S). Processes some mRNAs, and tRNAs when they are encoded in the rRNA operon. Processes pre-crRNA and tracrRNA of type II CRISPR loci if present in the organism. The chain is Ribonuclease 3 from Mycobacterium leprae (strain TN).